An 87-amino-acid chain; its full sequence is Small ribosomal subunit protein bS20 (87 aa).

Over residues 1–15 the composition is skewed to basic residues; it reads MANHKSAAKRARQSI. The disordered stretch occupies residues 1-29; the sequence is MANHKSAAKRARQSIRKTAVNNARKSTVK. The segment covering 19–29 has biased composition (polar residues); that stretch reads AVNNARKSTVK.

It belongs to the bacterial ribosomal protein bS20 family.

Binds directly to 16S ribosomal RNA. The polypeptide is Small ribosomal subunit protein bS20 (Bdellovibrio bacteriovorus (strain ATCC 15356 / DSM 50701 / NCIMB 9529 / HD100)).